The chain runs to 742 residues: Cullin-2 (742 aa).

The Cullin neddylation domain occupies Asp672–Asn734. A Glycyl lysine isopeptide (Lys-Gly) (interchain with G-Cter in NEDD8) cross-link involves residue Lys686.

It belongs to the cullin family. Interacts with SKIP17 and FBW2/SKIP18. Neddylated; which enhances the ubiquitination activity of E3 ubiquitin-protein ligase complexes.

Functionally, core component of multiple SCF (SKP1-CUL1-F-box protein) E3 ubiquitin-protein ligase complexes. Involved in ubiquitination and subsequent proteasomal degradation of target proteins. The sequence is that of Cullin-2 (CUL2) from Arabidopsis thaliana (Mouse-ear cress).